The chain runs to 115 residues: Large ribosomal subunit protein bL19 (115 aa).

This sequence belongs to the bacterial ribosomal protein bL19 family.

This protein is located at the 30S-50S ribosomal subunit interface and may play a role in the structure and function of the aminoacyl-tRNA binding site. The polypeptide is Large ribosomal subunit protein bL19 (Fervidobacterium nodosum (strain ATCC 35602 / DSM 5306 / Rt17-B1)).